Consider the following 317-residue polypeptide: mRNA 3'-end-processing protein yth-1 (317 aa).

Residues 1-20 (MATTTQTTTNSLPSGAGGPQ) are disordered. C3H1-type zinc fingers lie at residues 51-78 (PADR…HVTA), 93-120 (GFGS…HEYN), 121-149 (LRKM…HIDP), 150-177 (LSRL…HFRR), and 179-202 (LCLY…HPRW). The segment covering 202–217 (WTADKDMEKPRAKGEG) has biased composition (basic and acidic residues). The disordered stretch occupies residues 202-317 (WTADKDMEKP…GRGGFRGKGH (116 aa)). Residues 223–237 (QQQQQQQQQQHMGDA) show a composition bias toward low complexity. The segment covering 253 to 288 (YMDRERERDRDNREREMMMQGRDRDGGGHDRHKDRF) has biased composition (basic and acidic residues). A compositionally biased stretch (gly residues) spans 289-301 (GGGGGGGGGGRGR). Basic residues predominate over residues 302–317 (GGWRGRGRGGFRGKGH).

This sequence belongs to the CPSF4/YTH1 family.

The protein localises to the nucleus. In terms of biological role, component of the cleavage factor I (CF I) involved in pre-mRNA 3'-end processing. The chain is mRNA 3'-end-processing protein yth-1 (yth-1) from Neurospora crassa (strain ATCC 24698 / 74-OR23-1A / CBS 708.71 / DSM 1257 / FGSC 987).